The sequence spans 464 residues: GTPase Der (464 aa).

2 EngA-type G domains span residues 3–166 and 177–350; these read PTIA…AVES and LKMA…QAAT. GTP-binding positions include 9 to 16, 56 to 60, 118 to 121, 183 to 190, 230 to 234, and 295 to 298; these read GRPNVGKS, DTGGI, NKVD, DTAGV, and NKWD. Positions 351–435 constitute a KH-like domain; sequence EKYSTSFLTR…PVRIEYRSGD (85 aa).

The protein belongs to the TRAFAC class TrmE-Era-EngA-EngB-Septin-like GTPase superfamily. EngA (Der) GTPase family. As to quaternary structure, associates with the 50S ribosomal subunit.

Its function is as follows. GTPase that plays an essential role in the late steps of ribosome biogenesis. This is GTPase Der from Teredinibacter turnerae (strain ATCC 39867 / T7901).